A 94-amino-acid chain; its full sequence is Large ribosomal subunit protein uL23 (94 aa).

This sequence belongs to the universal ribosomal protein uL23 family. As to quaternary structure, part of the 50S ribosomal subunit. Contacts protein L29, and trigger factor when it is bound to the ribosome.

Its function is as follows. One of the early assembly proteins it binds 23S rRNA. One of the proteins that surrounds the polypeptide exit tunnel on the outside of the ribosome. Forms the main docking site for trigger factor binding to the ribosome. The protein is Large ribosomal subunit protein uL23 of Geobacter metallireducens (strain ATCC 53774 / DSM 7210 / GS-15).